The sequence spans 143 residues: Lutropin subunit beta (143 aa).

The signal sequence occupies residues 1–22 (MEMLQGLLLLWLLLLNVGGVWT). Intrachain disulfides connect C31-C79, C45-C94, C48-C132, C56-C110, C60-C112, and C115-C122. N-linked (GlcNAc...) asparagine glycosylation occurs at N35.

This sequence belongs to the glycoprotein hormones subunit beta family. As to quaternary structure, heterodimer of a common alpha chain and a unique beta chain which confers biological specificity to thyrotropin, lutropin, follitropin and gonadotropin.

The protein resides in the secreted. Its function is as follows. Promotes spermatogenesis and ovulation by stimulating the testes and ovaries to synthesize steroids. This chain is Lutropin subunit beta (LHB), found in Felis catus (Cat).